Consider the following 586-residue polypeptide: Lipoprotein LpqB (586 aa).

The first 17 residues, 1–17 (MVRSVFALVFAAVLLGG), serve as a signal peptide directing secretion. A lipid anchor (N-palmitoyl cysteine) is attached at Cys-18. Residue Cys-18 is the site of S-diacylglycerol cysteine attachment. The disordered stretch occupies residues 26–45 (APQAIGTVERPAPSNLPKPI).

It belongs to the LpqB lipoprotein family.

It localises to the cell membrane. The protein is Lipoprotein LpqB of Mycobacterium ulcerans (strain Agy99).